The chain runs to 54 residues: Large ribosomal subunit protein bL33 (54 aa).

It belongs to the bacterial ribosomal protein bL33 family.

The protein is Large ribosomal subunit protein bL33 of Thermus thermophilus (strain ATCC BAA-163 / DSM 7039 / HB27).